The following is a 221-amino-acid chain: C-8 sterol isomerase (221 aa).

A helical transmembrane segment spans residues 5–25; it reads ISGFLRFVAVLLAVVSPLVYL.

Belongs to the ERG2 family.

Its subcellular location is the endoplasmic reticulum membrane. The protein operates within steroid metabolism; ergosterol biosynthesis; ergosterol from zymosterol: step 2/5. Catalyzes the reaction which results in unsaturation at C-7 in the B ring of sterols. The protein is C-8 sterol isomerase (ERG2) of Pyricularia oryzae (strain 70-15 / ATCC MYA-4617 / FGSC 8958) (Rice blast fungus).